The sequence spans 506 residues: Secreted RxLR effector protein 134 (506 aa).

The first 19 residues, 1–19 (MQGAYCVAVALLIAASGQA), serve as a signal peptide directing secretion. A RxLR-dEER motif is present at residues 50–71 (RVLQVSHYPKDDLMLLAGNEER).

It belongs to the RxLR effector family.

It localises to the secreted. The protein resides in the host nucleus. Its function is as follows. Secreted effector that completely suppresses the host cell death induced by cell death-inducing proteins. This Plasmopara viticola (Downy mildew of grapevine) protein is Secreted RxLR effector protein 134.